We begin with the raw amino-acid sequence, 592 residues long: Aspartate--tRNA(Asp/Asn) ligase (592 aa).

L-aspartate is bound at residue Glu172. Residues 196–199 form an aspartate region; the sequence is QLFK. Residue Arg218 coordinates L-aspartate. ATP contacts are provided by residues 218–220 and Gln227; that span reads RDE. His450 contributes to the L-aspartate binding site. Residue Glu484 coordinates ATP. An L-aspartate-binding site is contributed by Arg491. Residue 536–539 participates in ATP binding; that stretch reads GLDR.

Belongs to the class-II aminoacyl-tRNA synthetase family. Type 1 subfamily. As to quaternary structure, homodimer.

It localises to the cytoplasm. The enzyme catalyses tRNA(Asx) + L-aspartate + ATP = L-aspartyl-tRNA(Asx) + AMP + diphosphate. In terms of biological role, aspartyl-tRNA synthetase with relaxed tRNA specificity since it is able to aspartylate not only its cognate tRNA(Asp) but also tRNA(Asn). Reaction proceeds in two steps: L-aspartate is first activated by ATP to form Asp-AMP and then transferred to the acceptor end of tRNA(Asp/Asn). The chain is Aspartate--tRNA(Asp/Asn) ligase from Thioalkalivibrio sulfidiphilus (strain HL-EbGR7).